We begin with the raw amino-acid sequence, 104 residues long: ATP-dependent Clp protease adapter protein ClpS (104 aa).

The protein belongs to the ClpS family. Binds to the N-terminal domain of the chaperone ClpA.

Functionally, involved in the modulation of the specificity of the ClpAP-mediated ATP-dependent protein degradation. The chain is ATP-dependent Clp protease adapter protein ClpS from Oleidesulfovibrio alaskensis (strain ATCC BAA-1058 / DSM 17464 / G20) (Desulfovibrio alaskensis).